We begin with the raw amino-acid sequence, 122 residues long: uncharacterized protein (122 aa).

The next 2 membrane-spanning stretches (helical) occupy residues 43–63 (PIII…IFFI) and 76–96 (AVAD…ILYF).

It localises to the membrane. This is an uncharacterized protein from Schizosaccharomyces pombe (strain 972 / ATCC 24843) (Fission yeast).